The sequence spans 865 residues: Alanine--tRNA ligase (865 aa).

Residues H554, H558, C656, and H660 each coordinate Zn(2+).

Belongs to the class-II aminoacyl-tRNA synthetase family. It depends on Zn(2+) as a cofactor.

Its subcellular location is the cytoplasm. It catalyses the reaction tRNA(Ala) + L-alanine + ATP = L-alanyl-tRNA(Ala) + AMP + diphosphate. Its function is as follows. Catalyzes the attachment of alanine to tRNA(Ala) in a two-step reaction: alanine is first activated by ATP to form Ala-AMP and then transferred to the acceptor end of tRNA(Ala). Also edits incorrectly charged Ser-tRNA(Ala) and Gly-tRNA(Ala) via its editing domain. In Francisella tularensis subsp. tularensis (strain FSC 198), this protein is Alanine--tRNA ligase.